A 492-amino-acid polypeptide reads, in one-letter code: ATP synthase subunit beta, chloroplastic (492 aa).

Residue 170 to 177 (GGAGVGKT) participates in ATP binding.

It belongs to the ATPase alpha/beta chains family. In terms of assembly, F-type ATPases have 2 components, CF(1) - the catalytic core - and CF(0) - the membrane proton channel. CF(1) has five subunits: alpha(3), beta(3), gamma(1), delta(1), epsilon(1). CF(0) has four main subunits: a(1), b(1), b'(1) and c(9-12).

The protein localises to the plastid. It is found in the chloroplast thylakoid membrane. The catalysed reaction is ATP + H2O + 4 H(+)(in) = ADP + phosphate + 5 H(+)(out). Produces ATP from ADP in the presence of a proton gradient across the membrane. The catalytic sites are hosted primarily by the beta subunits. The sequence is that of ATP synthase subunit beta, chloroplastic from Marchantia polymorpha (Common liverwort).